The sequence spans 267 residues: Undecaprenyl-diphosphatase 1 (267 aa).

The next 8 helical transmembrane spans lie at 6–26, 41–60, 83–103, 109–129, 142–162, 185–205, 217–237, and 244–264; these read VLVVALIQGLGEVLPFGAAGL, AALSVAAHAGILLALMIYFW, HLLLHVLAGTIPAAIVGWLVL, LVGQSGAAIILILGGVLLWGC, MSWVGAAGLGALQILSLVPGV, FSMLLAMPLILGHGVKTFWGL, LLMAMATAGLAALIGLAGMMA, and FVPFAILRIGFGIAVLGLVYF.

This sequence belongs to the UppP family.

Its subcellular location is the cell inner membrane. It catalyses the reaction di-trans,octa-cis-undecaprenyl diphosphate + H2O = di-trans,octa-cis-undecaprenyl phosphate + phosphate + H(+). Catalyzes the dephosphorylation of undecaprenyl diphosphate (UPP). Confers resistance to bacitracin. This chain is Undecaprenyl-diphosphatase 1, found in Paramagnetospirillum magneticum (strain ATCC 700264 / AMB-1) (Magnetospirillum magneticum).